We begin with the raw amino-acid sequence, 264 residues long: MAISIKTPEDIEKMRVAGRLAAEVLEMIEPYVKPGVSTGELDRICNDYIVNEQHAVSACLGYHGYPKSVCISINEVVCHGIPDDAKLLKDGDIVNIDVTVIKDGFHGDTSKMFIVGKPTIMGERLCRITQESLYLALRMVKPGINLREIGAAIQKFVEAEGFSVVREYCGHGIGRGFHEEPQVLHYDSRETNVVLKPGMTFTIEPMVNAGKKEIRTMKDGWTVKTKDRSLSAQYEHTIVVTDNGCEILTLRKDDTIPAIISHDE.

His-79 serves as a coordination point for substrate. 3 residues coordinate a divalent metal cation: Asp-97, Asp-108, and His-171. Residue His-178 coordinates substrate. Residues Glu-204 and Glu-235 each coordinate a divalent metal cation.

Belongs to the peptidase M24A family. Methionine aminopeptidase type 1 subfamily. As to quaternary structure, monomer. Requires Co(2+) as cofactor. Zn(2+) serves as cofactor. It depends on Mn(2+) as a cofactor. Fe(2+) is required as a cofactor.

It catalyses the reaction Release of N-terminal amino acids, preferentially methionine, from peptides and arylamides.. In terms of biological role, removes the N-terminal methionine from nascent proteins. The N-terminal methionine is often cleaved when the second residue in the primary sequence is small and uncharged (Met-Ala-, Cys, Gly, Pro, Ser, Thr, or Val). Requires deformylation of the N(alpha)-formylated initiator methionine before it can be hydrolyzed. The sequence is that of Methionine aminopeptidase from Escherichia coli O157:H7.